Consider the following 806-residue polypeptide: MSENSSDSDSSCGWTVISHEGSDIEMLNSVTPTNSCEPAPECSSLEQEELQALQLEQGESSQNGTVLMEETAYPALEETSSTIEAEEEKIPEDNIYIGTASDDSDIVTLEPPKLEEIGNQEVVIVEEAQSSEDFNMGSSSSSQYTFCQPETVFSSQPSDDESSSDETSNQPSPAFRRRRARKKTVSTSESEDRLVAEQETEPSKESKRQFSSGLNKCVILALVIAVSMGFGHFYGTIQIQKRQQLVRKIHEDELNDMKDYLSQCQQEQGSFIDYKSLKENLARCWTLTEAEKMSFETQKTNLATENQYLRVSLEKEEKALSSLQEELNKLREQIRILEDKGTSTELVKENQKLKQHLEEEKQKKHSFLSQRETLLTEAKMLKRELERERLVTTALRGELQQLSGSQLHGKSDSPNVYTEKKEIAILRERLTELERKLTFEQQRSDLWERLYVEAKDQSGKQETDGKKKVGRGNHRAKNKSKETFLGSVKETFDAMKNSTKEFVRHHKEKIKQAKEAVKENLKKFSDSVKSTFRHFKDTTKNIFDEKGNKRFGATKAAAEKPRTVFSDYLHPQYKAPTENHHNRGPTMQNDGRKEKPVHFKEFRKNTNSRKCSPGHACRENSHSFRKACYGVFDCAQQESISLFNTVVNPIRMDEFRQIIQRYMLKELDTFCHWNELDRFINKFFLNGVFIHDQKLFTDFVNDVKDYLRNMKEYQVDNDGVFEKLDEYIYRHFFGHTFSPPYGPSRPDKKQRMVNIENSRHRKQEQKHLQPQPYKREGKWHKYGRTNGRQMANLEIELGQLPFDPQY.

The Cytoplasmic portion of the chain corresponds to 1 to 216; that stretch reads MSENSSDSDS…KRQFSSGLNK (216 aa). The tract at residues 1–307 is interaction with MCF2L and SRC; it reads MSENSSDSDS…QKTNLATENQ (307 aa). Disordered regions lie at residues 80–105 and 152–207; these read SSTI…DDSD and VFSS…KESK. The segment covering 175–184 has biased composition (basic residues); the sequence is FRRRRARKKT. Position 186 is a phosphoserine (serine 186). Residues 190–207 show a composition bias toward basic and acidic residues; the sequence is SEDRLVAEQETEPSKESK. The helical; Signal-anchor for type II membrane protein transmembrane segment at 217 to 237 threads the bilayer; sequence CVILALVIAVSMGFGHFYGTI. The Lumenal segment spans residues 238-806; that stretch reads QIQKRQQLVR…LGQLPFDPQY (569 aa). Positions 305–449 form a coiled coil; the sequence is ENQYLRVSLE…EQQRSDLWER (145 aa). Positions 457-467 are enriched in basic and acidic residues; that stretch reads QSGKQETDGKK. Residues 457-478 are disordered; the sequence is QSGKQETDGKKKVGRGNHRAKN. A compositionally biased stretch (basic residues) spans 468-478; that stretch reads KVGRGNHRAKN. The stretch at 503–529 forms a coiled coil; the sequence is VRHHKEKIKQAKEAVKENLKKFSDSVK. The segment at 758–778 is disordered; sequence SRHRKQEQKHLQPQPYKREGK.

This sequence belongs to the CCPG1 family. As to quaternary structure, interacts with MCF2L. May interact with MCF2, ARHGEF1, BCR, VAV1 and FGD1, but not with TIAM1. Interacts with GTP-bound CDC42 and SRC.

Its subcellular location is the cytoplasmic granule membrane. In terms of biological role, acts as an assembly platform for Rho protein signaling complexes. Limits guanine nucleotide exchange activity of MCF2L toward RHOA, which results in an inhibition of both its transcriptional activation ability and its transforming activity. Does not inhibit activity of MCF2L toward CDC42, or activity of MCF2 toward either RHOA or CDC42. May be involved in cell cycle regulation. The protein is Cell cycle progression protein 1 (CCPG1) of Pongo abelii (Sumatran orangutan).